A 292-amino-acid polypeptide reads, in one-letter code: Elongation factor Ts (292 aa).

The tract at residues 80–83 is involved in Mg(2+) ion dislocation from EF-Tu; sequence TDFV.

Belongs to the EF-Ts family.

Its subcellular location is the cytoplasm. Functionally, associates with the EF-Tu.GDP complex and induces the exchange of GDP to GTP. It remains bound to the aminoacyl-tRNA.EF-Tu.GTP complex up to the GTP hydrolysis stage on the ribosome. This is Elongation factor Ts from Pediococcus pentosaceus (strain ATCC 25745 / CCUG 21536 / LMG 10740 / 183-1w).